The following is a 424-amino-acid chain: Vasopressin V1a receptor (424 aa).

Residues 1 to 40 form a disordered region; the sequence is MSFPRGSQDRSVGNSSPWWPLTTEGSNGSQEAARLGEGDS. Over 1–52 the chain is Extracellular; the sequence is MSFPRGSQDRSVGNSSPWWPLTTEGSNGSQEAARLGEGDSPLGDVRNEELAK. A compositionally biased stretch (polar residues) spans 9–30; that stretch reads DRSVGNSSPWWPLTTEGSNGSQ. A glycan (N-linked (GlcNAc...) asparagine) is linked at asparagine 27. The helical transmembrane segment at 53–76 threads the bilayer; the sequence is LEIAVLAVIFVVAVLGNSSVLLAL. Residues 77–88 lie on the Cytoplasmic side of the membrane; sequence HRTPRKTSRMHL. Residues 89 to 110 traverse the membrane as a helical segment; it reads FIRHLSLADLAVAFFQVLPQLC. Residues 111–125 are Extracellular-facing; it reads WDITYRFRGPDWLCR. Cysteines 124 and 205 form a disulfide. Residues 126–147 form a helical membrane-spanning segment; sequence VVKHLQVFAMFASAYMLVVMTA. The Cytoplasmic portion of the chain corresponds to 148 to 168; it reads DRYIAVCHPLKTLQQPARRSR. The chain crosses the membrane as a helical span at residues 169-190; it reads LMIATSWVLSFILSTPQYFIFS. Residues 191–220 are Extracellular-facing; the sequence is VIEIEVNNGTKTQDCWATFIQPWGTRAYVT. The helical transmembrane segment at 221–241 threads the bilayer; that stretch reads WMTSGVFVAPVVVLGTCYGFI. The Cytoplasmic segment spans residues 242-299; sequence CYHIWRNIRGKTASSRHSKGDKGSGEAVGPFHKGLLVTPCVSSVKSISRAKIRTVKMT. Residues 300–319 traverse the membrane as a helical segment; the sequence is FVIVSAYILCWAPFFIVQMW. Residues 320–337 lie on the Extracellular side of the membrane; sequence SVWDENFIWTDSENPSIT. Residues 338–357 traverse the membrane as a helical segment; it reads ITALLASLNSCCNPWIYMFF. Over 358–424 the chain is Cytoplasmic; it reads SGHLLQDCVQ…KSIRFIPVST (67 aa). S-palmitoyl cysteine attachment occurs at residues cysteine 371 and cysteine 372. The disordered stretch occupies residues 383–416; sequence DSDSMSRRQTSYSNNRSPTNSTGMWKDSPKSSKS. Residues 389-405 are compositionally biased toward polar residues; the sequence is RRQTSYSNNRSPTNSTG. The residue at position 410 (serine 410) is a Phosphoserine.

The protein belongs to the G-protein coupled receptor 1 family. Vasopressin/oxytocin receptor subfamily. In terms of processing, palmitoylated on three cysteine residues, of which only two are identified. As to expression, localized within gonadotropes of the anterior pituitary of the brain. Broadly distributed throughout the cerebral cortex.

The protein resides in the cell membrane. The protein localises to the cytoplasmic vesicle membrane. Receptor for arginine vasopressin. The activity of this receptor is mediated by G proteins which activate a phosphatidyl-inositol-calcium second messenger system. Involved in social memory formation. This is Vasopressin V1a receptor (Avpr1a) from Rattus norvegicus (Rat).